We begin with the raw amino-acid sequence, 549 residues long: ATP synthase subunit alpha (549 aa).

Position 172 to 179 (172 to 179 (GDRKTGKT)) interacts with ATP. Positions 513–549 (SSTGESVVPDEHVEAMDEEDLGKESVKVKKPAPQKKK) are disordered. The segment covering 540–549 (VKKPAPQKKK) has biased composition (basic residues).

This sequence belongs to the ATPase alpha/beta chains family. As to quaternary structure, F-type ATPases have 2 components, CF(1) - the catalytic core - and CF(0) - the membrane proton channel. CF(1) has five subunits: alpha(3), beta(3), gamma(1), delta(1), epsilon(1). CF(0) has three main subunits: a(1), b(2) and c(9-12). The alpha and beta chains form an alternating ring which encloses part of the gamma chain. CF(1) is attached to CF(0) by a central stalk formed by the gamma and epsilon chains, while a peripheral stalk is formed by the delta and b chains.

It localises to the cell membrane. The enzyme catalyses ATP + H2O + 4 H(+)(in) = ADP + phosphate + 5 H(+)(out). Functionally, produces ATP from ADP in the presence of a proton gradient across the membrane. The alpha chain is a regulatory subunit. In Mycobacterium ulcerans (strain Agy99), this protein is ATP synthase subunit alpha.